A 360-amino-acid chain; its full sequence is Peptide chain release factor 1 (360 aa).

At Gln-235 the chain carries N5-methylglutamine.

This sequence belongs to the prokaryotic/mitochondrial release factor family. In terms of processing, methylated by PrmC. Methylation increases the termination efficiency of RF1.

The protein localises to the cytoplasm. Peptide chain release factor 1 directs the termination of translation in response to the peptide chain termination codons UAG and UAA. The chain is Peptide chain release factor 1 from Burkholderia cenocepacia (strain HI2424).